Consider the following 292-residue polypeptide: Diaminopimelate epimerase (292 aa).

2 residues coordinate substrate: asparagine 14 and asparagine 78. The active-site Proton donor is the cysteine 87. Residues 88 to 89, asparagine 164, asparagine 197, and 221 to 222 each bind substrate; these read GN and ER. Residue cysteine 230 is the Proton acceptor of the active site. A substrate-binding site is contributed by 231 to 232; the sequence is GT.

It belongs to the diaminopimelate epimerase family. In terms of assembly, homodimer.

The protein resides in the cytoplasm. The enzyme catalyses (2S,6S)-2,6-diaminopimelate = meso-2,6-diaminopimelate. The protein operates within amino-acid biosynthesis; L-lysine biosynthesis via DAP pathway; DL-2,6-diaminopimelate from LL-2,6-diaminopimelate: step 1/1. Its function is as follows. Catalyzes the stereoinversion of LL-2,6-diaminopimelate (L,L-DAP) to meso-diaminopimelate (meso-DAP), a precursor of L-lysine and an essential component of the bacterial peptidoglycan. The sequence is that of Diaminopimelate epimerase from Leifsonia xyli subsp. xyli (strain CTCB07).